Consider the following 422-residue polypeptide: 5-hydroxytryptamine receptor 1A (422 aa).

Residues 1-23 are disordered; that stretch reads MDVLSPGQGNNTTSPPAPFETGG. Over 1 to 38 the chain is Extracellular; that stretch reads MDVLSPGQGNNTTSPPAPFETGGNTTGISDVTFSYQVI. N-linked (GlcNAc...) asparagine glycosylation is found at N10, N11, and N24. The helical transmembrane segment at 39 to 59 threads the bilayer; the sequence is TSLLLGTLIFCAVLGNACVVA. Residues 60-73 lie on the Cytoplasmic side of the membrane; that stretch reads AIALERSLQNVANY. A helical transmembrane segment spans residues 74 to 98; that stretch reads LIGSLAVTDLMVSVLVLPMAALYQV. Over 99-107 the chain is Extracellular; the sequence is LNKWTLGQV. A helical transmembrane segment spans residues 108 to 132; that stretch reads TCDLFIALDVLCCTSSILHLCAIAL. C109 and C187 form a disulfide bridge. Serotonin is bound by residues D116 and C120. Residues 133–135 carry the DRY motif; important for ligand-induced conformation changes motif; the sequence is DRY. The Cytoplasmic portion of the chain corresponds to 133–152; that stretch reads DRYWAITDPIDYVNKRTPRR. The helical transmembrane segment at 153–174 threads the bilayer; sequence AAALISLTWLIGFLISIPPMLG. Residues 175–193 are Extracellular-facing; it reads WRTPEDRSDPDACTISKDH. A helical transmembrane segment spans residues 194–216; sequence GYTIYSTFGAFYIPLLLMLVLYG. The Cytoplasmic portion of the chain corresponds to 217–346; it reads RIFRAARFRI…LARERKTVKT (130 aa). A disordered region spans residues 235–262; that stretch reads KTGADTRHGASPAPQPKKSVNGESGSRN. 4 residues coordinate 1D-myo-inositol 4-phosphate: T314, K345, T346, and G352. A helical transmembrane segment spans residues 347–370; that stretch reads LGIIMGTFILCWLPFFIVALVLPF. The Extracellular segment spans residues 371-378; the sequence is CESSCHMP. The chain crosses the membrane as a helical span at residues 379–403; that stretch reads TLLGAIINWLGYSNSLLNPVIYAYF. The NPxxY motif; important for ligand-induced conformation changes and signaling signature appears at 396 to 400; the sequence is NPVIY. Residues F403, N404, and K405 each contribute to the 1D-myo-inositol 4-phosphate site. Over 404–422 the chain is Cytoplasmic; that stretch reads NKDFQNAFKKIIKCKFCRQ.

Belongs to the G-protein coupled receptor 1 family. 5-hydroxytryptamine receptor subfamily. HTR1A sub-subfamily. As to quaternary structure, heterodimer; heterodimerizes with GPER1. Interacts with YIF1B. Interacts with GPR39 and GALR1.

It is found in the cell membrane. The protein localises to the cell projection. It localises to the dendrite. With respect to regulation, G-protein coupled receptor activity is regulated by lipids: phosphatidylinositol 4-phosphate increases HTR1A-mediated activity. G-protein coupled receptor for 5-hydroxytryptamine (serotonin). Also functions as a receptor for various drugs and psychoactive substances. Ligand binding causes a conformation change that triggers signaling via guanine nucleotide-binding proteins (G proteins) and modulates the activity of downstream effectors, such as adenylate cyclase. HTR1A is coupled to G(i)/G(o) G alpha proteins and mediates inhibitory neurotransmission: signaling inhibits adenylate cyclase activity and activates a phosphatidylinositol-calcium second messenger system that regulates the release of Ca(2+) ions from intracellular stores. Beta-arrestin family members regulate signaling by mediating both receptor desensitization and resensitization processes. The sequence is that of 5-hydroxytryptamine receptor 1A (HTR1A) from Gorilla gorilla gorilla (Western lowland gorilla).